A 134-amino-acid polypeptide reads, in one-letter code: Parvalbumin-like EF-hand-containing protein (134 aa).

EF-hand domains lie at 55–90 (QLDD…IPSS) and 96–131 (LTDE…EKIP). Ca(2+)-binding residues include Asp68, Asp70, Ser72, Phe74, Glu76, Glu79, Asp109, Asp113, and Glu120.

It belongs to the parvalbumin family.

The sequence is that of Parvalbumin-like EF-hand-containing protein from Homo sapiens (Human).